The chain runs to 272 residues: Alkaline ceramidase (272 aa).

The next 2 helical transmembrane spans lie at 34–54 (FANT…IMLL) and 61–81 (VNGG…ASTY). Zn(2+) is bound at residue His-83. Transmembrane regions (helical) follow at residues 96 to 116 (LSLV…MKWF), 124 to 144 (LTVV…LCFL), 148 to 168 (LNAI…RYEG), and 183 to 203 (ILAL…LCDF). Zn(2+) is bound by residues His-213 and His-217. A helical membrane pass occupies residues 214-234 (ALFHLLAGLAGYTIFIMFSMI). A glycan (N-linked (GlcNAc...) asparagine) is linked at Asn-256.

It belongs to the alkaline ceramidase family. Requires Zn(2+) as cofactor.

Its subcellular location is the membrane. The catalysed reaction is an N-acylsphing-4-enine + H2O = sphing-4-enine + a fatty acid. In terms of biological role, hydrolyzes the sphingolipid ceramide into sphingosine and free fatty acid. This chain is Alkaline ceramidase, found in Caenorhabditis briggsae.